Consider the following 471-residue polypeptide: Tetratricopeptide repeat protein 29 (471 aa).

TPR repeat units lie at residues 92 to 131, 136 to 173, 182 to 215, 234 to 267, 274 to 307, 314 to 347, and 354 to 387; these read DKLP…EAAE, YEEV…AQLI, AEAE…THGR, VRTY…AREG, GEAS…STSL, GRAY…ARNN, and IRAC…AMEL. The interval 449–471 is disordered; it reads ATEDNIYQLPDAEEETRRSPENQ.

In terms of tissue distribution, expressed in spermatozoa (at protein level).

The protein localises to the cytoplasm. The protein resides in the cytoskeleton. It localises to the flagellum axoneme. Functionally, axonemal protein which is implicated in axonemal and/or peri-axonemal structure assembly and regulates flagellum assembly and beating and therefore sperm motility. The chain is Tetratricopeptide repeat protein 29 (Ttc29) from Mus musculus (Mouse).